The primary structure comprises 224 residues: Viral late gene transcription factor 3 (224 aa).

This sequence belongs to the orthopoxvirus VLTF-3/OPG127 family. Interacts with the late transcription elongation factor VLTF-4/OPG110. Interacts with the late transcription factors VLTF-1/OPG093.

Its function is as follows. Acts with RNA polymerase to initiate transcription from late gene promoters. The polypeptide is Viral late gene transcription factor 3 (OPG127) (Monkeypox virus).